The sequence spans 309 residues: 4-diphosphocytidyl-2-C-methyl-D-erythritol kinase (309 aa).

Lysine 11 is a catalytic residue. Residue 94–104 participates in ATP binding; sequence PVAAGLAGGSA. Aspartate 136 is a catalytic residue.

It belongs to the GHMP kinase family. IspE subfamily.

The catalysed reaction is 4-CDP-2-C-methyl-D-erythritol + ATP = 4-CDP-2-C-methyl-D-erythritol 2-phosphate + ADP + H(+). Its pathway is isoprenoid biosynthesis; isopentenyl diphosphate biosynthesis via DXP pathway; isopentenyl diphosphate from 1-deoxy-D-xylulose 5-phosphate: step 3/6. In terms of biological role, catalyzes the phosphorylation of the position 2 hydroxy group of 4-diphosphocytidyl-2C-methyl-D-erythritol. This is 4-diphosphocytidyl-2-C-methyl-D-erythritol kinase from Synechococcus sp. (strain JA-3-3Ab) (Cyanobacteria bacterium Yellowstone A-Prime).